We begin with the raw amino-acid sequence, 107 residues long: Thioredoxin (107 aa).

Residues 2–107 form the Thioredoxin domain; the sequence is VVHIENLNAF…TLKQKINDHK (106 aa). Active-site nucleophile residues include Cys32 and Cys35. A disulfide bridge links Cys32 with Cys35. Residues Cys71 and Cys75 each carry the S-nitrosocysteine modification.

It belongs to the thioredoxin family. May be nitrosylated on several cysteine residues, depending on the oxidation state. Nitrosylated Cys-75 may serve as donor for nitrosylation of target proteins.

It is found in the nucleus. The protein resides in the cytoplasm. Its subcellular location is the secreted. Its function is as follows. Participates in various redox reactions through the reversible oxidation of its active center dithiol to a disulfide and catalyzes dithiol-disulfide exchange reactions. Plays a role in the reversible S-nitrosylation of cysteine residues in target proteins, and thereby contributes to the response to intracellular nitric oxide. Nitrosylates the active site Cys of CASP3 in response to nitric oxide (NO), and thereby inhibits caspase-3 activity. Induces the FOS/JUN AP-1 DNA binding activity in ionizing radiation (IR) cells through its oxidation/reduction status and stimulates AP-1 transcriptional activity. This Ictalurus punctatus (Channel catfish) protein is Thioredoxin (txn).